The following is a 408-amino-acid chain: Phosphoglycerate kinase (408 aa).

Residues 24-26, R40, 63-66, R122, and R166 each bind substrate; these read DLN and HLGR. ATP is bound by residues K216, G304, E335, and 364 to 367; that span reads GGDS.

It belongs to the phosphoglycerate kinase family. Monomer.

It localises to the cytoplasm. It carries out the reaction (2R)-3-phosphoglycerate + ATP = (2R)-3-phospho-glyceroyl phosphate + ADP. It functions in the pathway carbohydrate degradation; glycolysis; pyruvate from D-glyceraldehyde 3-phosphate: step 2/5. The protein is Phosphoglycerate kinase of Mycolicibacterium smegmatis (strain ATCC 700084 / mc(2)155) (Mycobacterium smegmatis).